The following is a 305-amino-acid chain: ATP synthase gamma chain (305 aa).

It belongs to the ATPase gamma chain family. As to quaternary structure, F-type ATPases have 2 components, CF(1) - the catalytic core - and CF(0) - the membrane proton channel. CF(1) has five subunits: alpha(3), beta(3), gamma(1), delta(1), epsilon(1). CF(0) has three main subunits: a, b and c.

It is found in the cell membrane. Functionally, produces ATP from ADP in the presence of a proton gradient across the membrane. The gamma chain is believed to be important in regulating ATPase activity and the flow of protons through the CF(0) complex. This chain is ATP synthase gamma chain, found in Mycobacterium tuberculosis (strain ATCC 25177 / H37Ra).